Here is a 264-residue protein sequence, read N- to C-terminus: Undecaprenyl-diphosphatase (264 aa).

Transmembrane regions (helical) follow at residues 7–27 (IVLA…SAHL), 41–61 (LIFD…YYQA), 89–109 (VLLG…FVAV), 114–134 (IEII…ASWF), 144–164 (TISW…LIPG), 186–206 (IQFS…LMLI), 219–239 (LLVL…IFVI), and 244–264 (MVGM…LFFL).

The protein belongs to the UppP family.

Its subcellular location is the cell inner membrane. The catalysed reaction is di-trans,octa-cis-undecaprenyl diphosphate + H2O = di-trans,octa-cis-undecaprenyl phosphate + phosphate + H(+). Functionally, catalyzes the dephosphorylation of undecaprenyl diphosphate (UPP). Confers resistance to bacitracin. The chain is Undecaprenyl-diphosphatase from Vesicomyosocius okutanii subsp. Calyptogena okutanii (strain HA).